Here is a 373-residue protein sequence, read N- to C-terminus: Centrosomal protein of 41 kDa (373 aa).

The tract at residues 89 to 137 is disordered; that stretch reads QRLEDNDSAASDPDAETTARTNGKGNPGEQSPSPEQFINNAGAGDSSRS. Residues serine 96 and serine 99 each carry the phosphoserine modification. The span at 106–127 shows a compositional bias: polar residues; sequence TARTNGKGNPGEQSPSPEQFIN. Threonine 109 is modified (phosphothreonine). Phosphoserine is present on serine 121. Positions 169–266 constitute a Rhodanese domain; that stretch reads PDCPFLLLDV…LAQKFPEGLI (98 aa). The disordered stretch occupies residues 275-373; that stretch reads QQALPPGSAR…SGHLQGKPWK (99 aa). Residues 298–312 show a composition bias toward basic and acidic residues; sequence NKWRFTPEDLKKIEY. The residue at position 343 (arginine 343) is an Omega-N-methylarginine. Polar residues predominate over residues 355–366; that stretch reads SHSNPRSLSSGH.

Belongs to the CEP41 family. Found in a complex with TTLL6. Expressed in testis and fetal tissues.

The protein localises to the cytoplasm. Its subcellular location is the cytoskeleton. It localises to the microtubule organizing center. It is found in the centrosome. The protein resides in the cell projection. The protein localises to the cilium. Its subcellular location is the cilium basal body. In terms of biological role, required during ciliogenesis for tubulin glutamylation in cilium. Probably acts by participating in the transport of TTLL6, a tubulin polyglutamylase, between the basal body and the cilium. The polypeptide is Centrosomal protein of 41 kDa (CEP41) (Homo sapiens (Human)).